A 394-amino-acid polypeptide reads, in one-letter code: DNA replication and repair protein RecF (394 aa).

An ATP-binding site is contributed by 30 to 37 (GPNAAGKT).

Belongs to the RecF family.

The protein localises to the cytoplasm. Its function is as follows. The RecF protein is involved in DNA metabolism; it is required for DNA replication and normal SOS inducibility. RecF binds preferentially to single-stranded, linear DNA. It also seems to bind ATP. The chain is DNA replication and repair protein RecF from Roseiflexus castenholzii (strain DSM 13941 / HLO8).